We begin with the raw amino-acid sequence, 445 residues long: Xylose isomerase (445 aa).

Active-site residues include histidine 107 and aspartate 110. Glutamate 238, glutamate 274, histidine 277, aspartate 302, aspartate 313, aspartate 315, and aspartate 345 together coordinate Mg(2+).

Belongs to the xylose isomerase family. In terms of assembly, homotetramer. The cofactor is Mg(2+).

It localises to the cytoplasm. It carries out the reaction alpha-D-xylose = alpha-D-xylulofuranose. This Priestia megaterium (strain DSM 319 / IMG 1521) (Bacillus megaterium) protein is Xylose isomerase (xylA).